A 197-amino-acid polypeptide reads, in one-letter code: Protein GrpE (197 aa).

Basic and acidic residues predominate over residues Met1–Gly12. The tract at residues Met1–Asp35 is disordered.

This sequence belongs to the GrpE family. Homodimer.

It is found in the cytoplasm. Its function is as follows. Participates actively in the response to hyperosmotic and heat shock by preventing the aggregation of stress-denatured proteins, in association with DnaK and GrpE. It is the nucleotide exchange factor for DnaK and may function as a thermosensor. Unfolded proteins bind initially to DnaJ; upon interaction with the DnaJ-bound protein, DnaK hydrolyzes its bound ATP, resulting in the formation of a stable complex. GrpE releases ADP from DnaK; ATP binding to DnaK triggers the release of the substrate protein, thus completing the reaction cycle. Several rounds of ATP-dependent interactions between DnaJ, DnaK and GrpE are required for fully efficient folding. The polypeptide is Protein GrpE (Nitrobacter winogradskyi (strain ATCC 25391 / DSM 10237 / CIP 104748 / NCIMB 11846 / Nb-255)).